The primary structure comprises 354 residues: Diaminopimelate epimerase, chloroplastic (354 aa).

A chloroplast-targeting transit peptide spans 1–44 (MSSATAAATATIAAAAAKLAATPAPAPSRRRLTLRGNPTARRCV). Catalysis depends on residues C142 and C297.

It belongs to the diaminopimelate epimerase family.

The protein resides in the plastid. It localises to the chloroplast. The enzyme catalyses (2S,6S)-2,6-diaminopimelate = meso-2,6-diaminopimelate. It participates in amino-acid biosynthesis; L-lysine biosynthesis via DAP pathway; DL-2,6-diaminopimelate from LL-2,6-diaminopimelate: step 1/1. The polypeptide is Diaminopimelate epimerase, chloroplastic (DAPF) (Oryza sativa subsp. japonica (Rice)).